The chain runs to 344 residues: Small ribosomal subunit biogenesis GTPase RsgA (344 aa).

The CP-type G domain maps to 100–268; the sequence is KNELSRPDYY…LIDSPGIREF (169 aa). GTP-binding positions include 156-159 and 210-218; these read NKID and GQSGVGKSS. Residues cysteine 292, cysteine 297, histidine 299, and cysteine 305 each contribute to the Zn(2+) site.

Belongs to the TRAFAC class YlqF/YawG GTPase family. RsgA subfamily. In terms of assembly, monomer. Associates with 30S ribosomal subunit, binds 16S rRNA. The cofactor is Zn(2+).

Its subcellular location is the cytoplasm. One of several proteins that assist in the late maturation steps of the functional core of the 30S ribosomal subunit. Helps release RbfA from mature subunits. May play a role in the assembly of ribosomal proteins into the subunit. Circularly permuted GTPase that catalyzes slow GTP hydrolysis, GTPase activity is stimulated by the 30S ribosomal subunit. The polypeptide is Small ribosomal subunit biogenesis GTPase RsgA (Actinobacillus pleuropneumoniae serotype 5b (strain L20)).